A 208-amino-acid chain; its full sequence is Ribosome maturation factor RimP (208 aa).

Positions Gly175–Gln208 are disordered. Residues Asp177–Gln208 show a composition bias toward acidic residues.

The protein belongs to the RimP family.

The protein resides in the cytoplasm. Required for maturation of 30S ribosomal subunits. This chain is Ribosome maturation factor RimP, found in Kineococcus radiotolerans (strain ATCC BAA-149 / DSM 14245 / SRS30216).